The sequence spans 1087 residues: Fanconi-associated nuclease 1 homolog (1087 aa).

6 disordered regions span residues 1–79 (MKSN…TPIK), 104–154 (FQKA…PNNL), 169–202 (EFLL…NNIT), 459–486 (TQNS…NNNI), 816–835 (ITSD…EKEN), and 842–871 (SVKK…EEEI). Low complexity predominate over residues 41–79 (TTTPPKTPTQPIRFTQNNNKENDKSNNNNNNNNTITPIK). A compositionally biased stretch (polar residues) spans 104-115 (FQKASTPSSPQI). 3 stretches are compositionally biased toward low complexity: residues 118–154 (KLPQ…PNNL), 182–202 (NTTT…NNIT), and 467–485 (NNNN…NNNN). Coiled coils occupy residues 419-490 (WKSK…KEYD) and 830-874 (KIEK…IIEI). The segment covering 848 to 871 (EQEEEEEEEEEGQGQEEEEEEEEI) has biased composition (acidic residues). Residues Glu899, Asp1023, Glu1051, and Val1052 each contribute to the Mn(2+) site. The 123-residue stretch at 961–1083 (DDLLILLNQS…GCDVEVCLVK (123 aa)) folds into the VRR-NUC domain.

The protein belongs to the FAN1 family. It depends on Mn(2+) as a cofactor. Requires Mg(2+) as cofactor.

It catalyses the reaction Hydrolytically removes 5'-nucleotides successively from the 3'-hydroxy termini of 3'-hydroxy-terminated oligonucleotides.. Functionally, nuclease required for the repair of DNA interstrand cross-links (ICL). Acts as a 5'-3' exonuclease that anchors at a cut end of DNA and cleaves DNA successively at every third nucleotide, allowing to excise an ICL from one strand through flanking incisions. In Dictyostelium discoideum (Social amoeba), this protein is Fanconi-associated nuclease 1 homolog (mtmr15).